We begin with the raw amino-acid sequence, 282 residues long: Pantothenate synthetase (282 aa).

30 to 37 (MGALHAGH) serves as a coordination point for ATP. His37 functions as the Proton donor in the catalytic mechanism. (R)-pantoate is bound at residue Gln61. Gln61 provides a ligand contact to beta-alanine. Residue 147-150 (GEKD) coordinates ATP. Gln153 is a (R)-pantoate binding site. ATP-binding positions include Val176 and 184 to 187 (LSSR).

This sequence belongs to the pantothenate synthetase family. In terms of assembly, homodimer.

It localises to the cytoplasm. The catalysed reaction is (R)-pantoate + beta-alanine + ATP = (R)-pantothenate + AMP + diphosphate + H(+). It functions in the pathway cofactor biosynthesis; (R)-pantothenate biosynthesis; (R)-pantothenate from (R)-pantoate and beta-alanine: step 1/1. Catalyzes the condensation of pantoate with beta-alanine in an ATP-dependent reaction via a pantoyl-adenylate intermediate. The polypeptide is Pantothenate synthetase (Bacteroides fragilis (strain YCH46)).